A 286-amino-acid polypeptide reads, in one-letter code: Bifunctional protein FolD (286 aa).

Residues 164 to 166 (GAS), I189, and I230 contribute to the NADP(+) site.

It belongs to the tetrahydrofolate dehydrogenase/cyclohydrolase family. Homodimer.

It carries out the reaction (6R)-5,10-methylene-5,6,7,8-tetrahydrofolate + NADP(+) = (6R)-5,10-methenyltetrahydrofolate + NADPH. It catalyses the reaction (6R)-5,10-methenyltetrahydrofolate + H2O = (6R)-10-formyltetrahydrofolate + H(+). It functions in the pathway one-carbon metabolism; tetrahydrofolate interconversion. Functionally, catalyzes the oxidation of 5,10-methylenetetrahydrofolate to 5,10-methenyltetrahydrofolate and then the hydrolysis of 5,10-methenyltetrahydrofolate to 10-formyltetrahydrofolate. The protein is Bifunctional protein FolD of Wolinella succinogenes (strain ATCC 29543 / DSM 1740 / CCUG 13145 / JCM 31913 / LMG 7466 / NCTC 11488 / FDC 602W) (Vibrio succinogenes).